The following is a 127-amino-acid chain: Large ribosomal subunit protein bL12 (127 aa).

It belongs to the bacterial ribosomal protein bL12 family. As to quaternary structure, homodimer. Part of the ribosomal stalk of the 50S ribosomal subunit. Forms a multimeric L10(L12)X complex, where L10 forms an elongated spine to which 2 to 4 L12 dimers bind in a sequential fashion. Binds GTP-bound translation factors.

Its function is as follows. Forms part of the ribosomal stalk which helps the ribosome interact with GTP-bound translation factors. Is thus essential for accurate translation. The chain is Large ribosomal subunit protein bL12 from Thiobacillus denitrificans (strain ATCC 25259 / T1).